Consider the following 438-residue polypeptide: L-cysteine:1D-myo-inositol 2-amino-2-deoxy-alpha-D-glucopyranoside ligase (438 aa).

Residues 1-27 (MKSWSSRPVPELPGTGTAPRVHDTSTG) form a disordered region. A Zn(2+)-binding site is contributed by Cys-44. L-cysteinyl-5'-AMP-binding positions include 44–47 (CGIT), Thr-59, and 82–84 (NVT). The short motif at 46 to 56 (ITPYDATHMGH) is the 'HIGH' region element. Positions 208-213 (DHGGDP) match the 'ERGGDP' region motif. An L-cysteinyl-5'-AMP-binding site is contributed by Trp-249. Cys-253 contacts Zn(2+). 271-273 (GSD) lines the L-cysteinyl-5'-AMP pocket. A Zn(2+)-binding site is contributed by His-278. Val-304 contributes to the L-cysteinyl-5'-AMP binding site. Positions 310–314 (KMSKS) match the 'KMSKS' region motif.

This sequence belongs to the class-I aminoacyl-tRNA synthetase family. MshC subfamily. Monomer. Requires Zn(2+) as cofactor.

It carries out the reaction 1D-myo-inositol 2-amino-2-deoxy-alpha-D-glucopyranoside + L-cysteine + ATP = 1D-myo-inositol 2-(L-cysteinylamino)-2-deoxy-alpha-D-glucopyranoside + AMP + diphosphate + H(+). Functionally, catalyzes the ATP-dependent condensation of GlcN-Ins and L-cysteine to form L-Cys-GlcN-Ins. This chain is L-cysteine:1D-myo-inositol 2-amino-2-deoxy-alpha-D-glucopyranoside ligase, found in Kocuria rhizophila (strain ATCC 9341 / DSM 348 / NBRC 103217 / DC2201).